The following is a 183-amino-acid chain: Putative manganese efflux pump MntP (183 aa).

6 helical membrane-spanning segments follow: residues Leu-6–Leu-26, Ile-40–Phe-60, Ile-64–Ile-84, Met-101–Leu-121, Leu-135–Leu-155, and Ile-158–Leu-178.

The protein belongs to the MntP (TC 9.B.29) family.

It is found in the cell membrane. Probably functions as a manganese efflux pump. The chain is Putative manganese efflux pump MntP from Clostridium tetani (strain Massachusetts / E88).